The following is a 71-amino-acid chain: MKQGIHPEYKEITATCSCGNVIKTRSTLGKDINLDVCGNCHPFYTGKQRVVDTGGRVERFNKRFSIPGTKK.

C16, C18, C37, and C40 together coordinate Zn(2+).

This sequence belongs to the bacterial ribosomal protein bL31 family. Type A subfamily. As to quaternary structure, part of the 50S ribosomal subunit. Zn(2+) serves as cofactor.

Its function is as follows. Binds the 23S rRNA. This is Large ribosomal subunit protein bL31 from Actinobacillus succinogenes (strain ATCC 55618 / DSM 22257 / CCUG 43843 / 130Z).